Consider the following 495-residue polypeptide: Homeobox protein ceh-21 (495 aa).

Residues 1–14 (MSQQFQASSGTGSA) are compositionally biased toward polar residues. Disordered regions lie at residues 1-24 (MSQQ…TEHE) and 89-267 (TAES…PGGE). Basic and acidic residues predominate over residues 106-120 (LEEKSDKSSDGDGTS). Over residues 132 to 145 (NETEEDHEEKEDEA) the composition is skewed to acidic residues. Positions 149 to 162 (SRRESTRLKRKLLE) are enriched in basic and acidic residues. 2 stretches are compositionally biased toward polar residues: residues 163–179 (SQKT…ASSK) and 199–217 (TPEQ…TVRA). Residues 218-233 (SSTCGSSVSSTSTVSS) are compositionally biased toward low complexity. The span at 242-254 (RATETPKLEELAP) shows a compositional bias: basic and acidic residues. Positions 284–370 (NAQIGDDEEL…VRRALCFLPK (87 aa)) form a DNA-binding region, CUT. The homeobox DNA-binding region spans 389–449 (KTVKVIRLTF…MNSRRRLRID (61 aa)). Positions 450 to 473 (QQISRSSRSTGNGADTEDELDEED) are disordered. Residues 464 to 473 (DTEDELDEED) are compositionally biased toward acidic residues.

It belongs to the CUT homeobox family.

It is found in the nucleus. Its function is as follows. Probable DNA-binding regulatory protein involved in cell-fate specification. This Caenorhabditis elegans protein is Homeobox protein ceh-21 (ceh-21).